The sequence spans 259 residues: Probable kinetochore protein spc25 (259 aa).

The segment covering 1 to 20 (MSRKSVMSSTFEPSLSTSRQ) has biased composition (polar residues). The tract at residues 1–25 (MSRKSVMSSTFEPSLSTSRQPLGPS) is disordered. Positions 59 to 162 (RKRVLEERNQ…HAAQLEAQAR (104 aa)) form a coiled coil.

It belongs to the SPC25 family. In terms of assembly, component of the NDC80 complex, which consists of kpr-1/ndc80, kpr-2/nuf2, kpr-3/spc24 and kpr-4/spc25.

It localises to the nucleus. Its subcellular location is the chromosome. The protein localises to the centromere. The protein resides in the kinetochore. In terms of biological role, acts as a component of the essential kinetochore-associated NDC80 complex, which is required for chromosome segregation and spindle checkpoint activity. The polypeptide is Probable kinetochore protein spc25 (kpr-4) (Neurospora crassa (strain ATCC 24698 / 74-OR23-1A / CBS 708.71 / DSM 1257 / FGSC 987)).